Here is a 448-residue protein sequence, read N- to C-terminus: Deoxyguanosinetriphosphate triphosphohydrolase-like protein (448 aa).

The tract at residues 1 to 26 (MQINSSWQERFLADPPREKDHRPPFR) is disordered. A compositionally biased stretch (basic and acidic residues) spans 11 to 26 (FLADPPREKDHRPPFR). The 214-residue stretch at 59-272 (RLTHSLEVAQ…MELADDIAYA (214 aa)) folds into the HD domain.

This sequence belongs to the dGTPase family. Type 2 subfamily.

This chain is Deoxyguanosinetriphosphate triphosphohydrolase-like protein, found in Histophilus somni (strain 129Pt) (Haemophilus somnus).